Here is a 291-residue protein sequence, read N- to C-terminus: Diaminopimelate epimerase (291 aa).

Positions 13, 46, and 66 each coordinate substrate. Catalysis depends on Cys-75, which acts as the Proton donor. Residues 76 to 77 (GN), Asn-170, Asn-203, and 221 to 222 (ER) contribute to the substrate site. Cys-230 functions as the Proton acceptor in the catalytic mechanism. 231–232 (GS) contributes to the substrate binding site.

Belongs to the diaminopimelate epimerase family. As to quaternary structure, homodimer.

The protein resides in the cytoplasm. It catalyses the reaction (2S,6S)-2,6-diaminopimelate = meso-2,6-diaminopimelate. Its pathway is amino-acid biosynthesis; L-lysine biosynthesis via DAP pathway; DL-2,6-diaminopimelate from LL-2,6-diaminopimelate: step 1/1. In terms of biological role, catalyzes the stereoinversion of LL-2,6-diaminopimelate (L,L-DAP) to meso-diaminopimelate (meso-DAP), a precursor of L-lysine and an essential component of the bacterial peptidoglycan. This chain is Diaminopimelate epimerase, found in Albidiferax ferrireducens (strain ATCC BAA-621 / DSM 15236 / T118) (Rhodoferax ferrireducens).